Reading from the N-terminus, the 316-residue chain is Olfactory receptor 52A5 (316 aa).

Residues 1–27 (MPTFNGSVFMPSAFILIGIPGLESVQC) are Extracellular-facing. Residue asparagine 5 is glycosylated (N-linked (GlcNAc...) asparagine). Residues 28–48 (WIGIPFSAMYLIGVIGNSLIL) traverse the membrane as a helical segment. Over 49–56 (VIIKYENS) the chain is Cytoplasmic. The helical transmembrane segment at 57 to 77 (LHIPMYIFLAMLAATDIALNT) threads the bilayer. Residues 78 to 101 (CILPKMLGIFWFHLPEISFDACLF) are Extracellular-facing. The helical transmembrane segment at 102-122 (QMWLIHSFQAIESGILLAMAL) threads the bilayer. At 123-141 (DRYVAICIPLRHATIFSQQ) the chain is on the cytoplasmic side. Residues 142 to 162 (FLTHIGLGVTLRAAILIIPSL) traverse the membrane as a helical segment. Residues 163–199 (GLIKCCLKHYRTTVISHSYCEHMAIVKLATEDIRVNK) lie on the Extracellular side of the membrane. Residues 200–220 (IYGLFVAFAILGFDIIFITLS) traverse the membrane as a helical segment. The Cytoplasmic portion of the chain corresponds to 221 to 240 (YVQIFITVFQLPQKEARFKA). A helical transmembrane segment spans residues 241-261 (FNTCIAHICVFLQFYLLAFFS). The Extracellular segment spans residues 262 to 276 (FFTHRFGSHIPPYIH). Residues 277-297 (ILLSNLYLLVPPFLNPIVYGV) traverse the membrane as a helical segment. At 298 to 316 (KTKQIRDHIVKVFFFKKVT) the chain is on the cytoplasmic side.

It belongs to the G-protein coupled receptor 1 family.

It is found in the cell membrane. Its function is as follows. Odorant receptor. This Homo sapiens (Human) protein is Olfactory receptor 52A5 (OR52A5).